The sequence spans 234 residues: Cytochrome b (234 aa).

4 helical membrane passes run 33 to 53, 77 to 98, 113 to 133, and 178 to 198; these read FGSL…FLAM, WLIR…YMHV, WNIG…GYVL, and FFAF…IHLL. The heme b site is built by H83 and H97. Heme b-binding residues include H182 and H196. Residue H201 participates in a ubiquinone binding. Residues 226-234 form a helical membrane-spanning segment; the sequence is IKDVLGFLM.

This sequence belongs to the cytochrome b family. As to quaternary structure, the cytochrome bc1 complex contains 11 subunits: 3 respiratory subunits (MT-CYB, CYC1 and UQCRFS1), 2 core proteins (UQCRC1 and UQCRC2) and 6 low-molecular weight proteins (UQCRH/QCR6, UQCRB/QCR7, UQCRQ/QCR8, UQCR10/QCR9, UQCR11/QCR10 and a cleavage product of UQCRFS1). This cytochrome bc1 complex then forms a dimer. Heme b serves as cofactor.

Its subcellular location is the mitochondrion inner membrane. Its function is as follows. Component of the ubiquinol-cytochrome c reductase complex (complex III or cytochrome b-c1 complex) that is part of the mitochondrial respiratory chain. The b-c1 complex mediates electron transfer from ubiquinol to cytochrome c. Contributes to the generation of a proton gradient across the mitochondrial membrane that is then used for ATP synthesis. The sequence is that of Cytochrome b (MT-CYB) from Lepus alleni (Antelope jackrabbit).